An 806-amino-acid polypeptide reads, in one-letter code: Leucine--tRNA ligase (806 aa).

The short motif at 38-48 is the 'HIGH' region element; it reads PYPSGEIHMGH. The short motif at 572-576 is the 'KMSKS' region element; it reads KMSKS. Lys575 is a binding site for ATP.

It belongs to the class-I aminoacyl-tRNA synthetase family.

Its subcellular location is the cytoplasm. The enzyme catalyses tRNA(Leu) + L-leucine + ATP = L-leucyl-tRNA(Leu) + AMP + diphosphate. The chain is Leucine--tRNA ligase from Helicobacter acinonychis (strain Sheeba).